The sequence spans 411 residues: D-ribitol-5-phosphate cytidylyltransferase (411 aa).

The protein belongs to the IspD/TarI cytidylyltransferase family. IspD subfamily. Homodimer.

It localises to the cytoplasm. The protein localises to the cytosol. It catalyses the reaction D-ribitol 5-phosphate + CTP + H(+) = CDP-L-ribitol + diphosphate. It carries out the reaction D-ribose 5-phosphate + CTP + H(+) = CDP-D-ribose + diphosphate. The catalysed reaction is D-ribulose 5-phosphate + CTP + H(+) = CDP-D-ribulose + diphosphate. It functions in the pathway protein modification; protein glycosylation. In terms of biological role, cytidylyltransferase required for protein O-linked mannosylation. Catalyzes the formation of CDP-ribitol nucleotide sugar from D-ribitol 5-phosphate. CDP-ribitol is a substrate of FKTN during the biosynthesis of the phosphorylated O-mannosyl trisaccharide (N-acetylgalactosamine-beta-3-N-acetylglucosamine-beta-4-(phosphate-6-)mannose), a carbohydrate structure present in alpha-dystroglycan (DAG1), which is required for binding laminin G-like domain-containing extracellular proteins with high affinity. Shows activity toward other pentose phosphate sugars and mediates formation of CDP-ribulose or CDP-ribose using CTP and ribulose-5-phosphate or ribose-5-phosphate, respectively. Not involved in dolichol production. This Xenopus tropicalis (Western clawed frog) protein is D-ribitol-5-phosphate cytidylyltransferase (crppa).